The sequence spans 457 residues: ATP synthase subunit beta (457 aa).

147–154 (GGAGVGKT) provides a ligand contact to ATP.

This sequence belongs to the ATPase alpha/beta chains family. As to quaternary structure, F-type ATPases have 2 components, CF(1) - the catalytic core - and CF(0) - the membrane proton channel. CF(1) has five subunits: alpha(3), beta(3), gamma(1), delta(1), epsilon(1). CF(0) has three main subunits: a(1), b(2) and c(9-12). The alpha and beta chains form an alternating ring which encloses part of the gamma chain. CF(1) is attached to CF(0) by a central stalk formed by the gamma and epsilon chains, while a peripheral stalk is formed by the delta and b chains.

It is found in the cell inner membrane. The catalysed reaction is ATP + H2O + 4 H(+)(in) = ADP + phosphate + 5 H(+)(out). In terms of biological role, produces ATP from ADP in the presence of a proton gradient across the membrane. The catalytic sites are hosted primarily by the beta subunits. This chain is ATP synthase subunit beta, found in Histophilus somni (strain 2336) (Haemophilus somnus).